Consider the following 314-residue polypeptide: MSSAAPIVCLAGPTAAGKSAATLALAQRWPLEVVNVDSATIYRGMDIGTAKPSPAEQARVPQHLLDIRDPAQSYSAAEFRADALRLIDEIRARGRMPLLAGGTMLYYKALRDGLDDLPQADPALRAELEARAARLGWPALHAELARLDPATAARLAPNDSQRIQRALEICTLSGQPMSALLHGRQRAADATPHRYVTLSLEPSDRAALHARIAQRFDAMLAGGLLDEVRALRARGDLHPGLPSVRCVGYRQMWAHLDGAVDLETAREQAIAATRQLAKRQLTWLRAQPERLVVDCLAGNASGRVVDRVAEILAD.

12–19 (GPTAAGKS) serves as a coordination point for ATP. Substrate is bound at residue 14–19 (TAAGKS). Interaction with substrate tRNA regions lie at residues 37–40 (DSAT), 161–165 (QRIQR), and 245–250 (RCVGYR).

This sequence belongs to the IPP transferase family. Monomer. The cofactor is Mg(2+).

The catalysed reaction is adenosine(37) in tRNA + dimethylallyl diphosphate = N(6)-dimethylallyladenosine(37) in tRNA + diphosphate. Its function is as follows. Catalyzes the transfer of a dimethylallyl group onto the adenine at position 37 in tRNAs that read codons beginning with uridine, leading to the formation of N6-(dimethylallyl)adenosine (i(6)A). The chain is tRNA dimethylallyltransferase from Bordetella petrii (strain ATCC BAA-461 / DSM 12804 / CCUG 43448).